Reading from the N-terminus, the 388-residue chain is Quinolone resistance protein NorA (388 aa).

Helical transmembrane passes span 5–25 (IFVL…VIPV), 42–62 (LLVA…GTLA), 69–89 (LIIC…AVGH), 99–119 (VIGG…IADI), 129–149 (FGYM…IGGF), 157–177 (MPFY…IVLI), 201–221 (WKVF…LSAF), 239–259 (DISI…IYFF), 269–289 (LTFI…LVFA), 293–313 (WSIM…RPAI), 331–351 (LNST…GALF), and 355–375 (IEAP…IVLI).

This sequence belongs to the major facilitator superfamily. TCR/Tet family.

Its subcellular location is the cell membrane. Functionally, involved in quinolone resistance. May constitute a membrane-associated active efflux pump of hydrophilic quinolones. This is Quinolone resistance protein NorA (norA) from Staphylococcus aureus (strain Mu50 / ATCC 700699).